A 318-amino-acid chain; its full sequence is Aspartate carbamoyltransferase catalytic subunit (318 aa).

Carbamoyl phosphate contacts are provided by Arg59 and Thr60. Lys87 lines the L-aspartate pocket. Residues Arg109, His137, and Gln140 each contribute to the carbamoyl phosphate site. Residues Arg170 and Arg224 each contribute to the L-aspartate site. Positions 265 and 266 each coordinate carbamoyl phosphate.

It belongs to the aspartate/ornithine carbamoyltransferase superfamily. ATCase family. As to quaternary structure, heterododecamer (2C3:3R2) of six catalytic PyrB chains organized as two trimers (C3), and six regulatory PyrI chains organized as three dimers (R2).

The catalysed reaction is carbamoyl phosphate + L-aspartate = N-carbamoyl-L-aspartate + phosphate + H(+). The protein operates within pyrimidine metabolism; UMP biosynthesis via de novo pathway; (S)-dihydroorotate from bicarbonate: step 2/3. Its function is as follows. Catalyzes the condensation of carbamoyl phosphate and aspartate to form carbamoyl aspartate and inorganic phosphate, the committed step in the de novo pyrimidine nucleotide biosynthesis pathway. In Rhizobium etli (strain ATCC 51251 / DSM 11541 / JCM 21823 / NBRC 15573 / CFN 42), this protein is Aspartate carbamoyltransferase catalytic subunit.